The chain runs to 224 residues: UPF0758 protein Noc_0236 (224 aa).

One can recognise an MPN domain in the interval 102-224 (VLTDPQTTQR…TLSFAERGLL (123 aa)). Residues histidine 173, histidine 175, and aspartate 186 each coordinate Zn(2+). Positions 173–186 (HNHPSGVAEPSRAD) match the JAMM motif motif.

This sequence belongs to the UPF0758 family.

In Nitrosococcus oceani (strain ATCC 19707 / BCRC 17464 / JCM 30415 / NCIMB 11848 / C-107), this protein is UPF0758 protein Noc_0236.